The sequence spans 1485 residues: ABC multidrug transporter I (1485 aa).

Disordered regions lie at residues 1–57 (MDEK…EEFS) and 75–111 (KQIS…ALRG). Residues 8-24 (SESSNGSDVDSLSTASA) are compositionally biased toward polar residues. The N-linked (GlcNAc...) asparagine glycan is linked to Asn12. The span at 85 to 95 (GKTEDVERSDS) shows a compositional bias: basic and acidic residues. Residues Asn132, Asn335, and Asn451 are each glycosylated (N-linked (GlcNAc...) asparagine). The ABC transporter 1 domain maps to 163-411 (MHMLGYGKKG…FESLGFKERP (249 aa)). 7 helical membrane passes run 522-542 (FAQT…GTVW), 556-576 (GGLL…ELVS), 600-620 (IAQI…FSII), 623-643 (FMCG…IIVL), 664-684 (YAMK…GYLI), 691-711 (EWLR…ALMV), and 774-794 (FGIM…HGET). Positions 846–1089 (FTWEDVCYDV…LLDYFRRNGA (244 aa)) constitute an ABC transporter 2 domain. Position 882 to 889 (882 to 889 (GASGAGKT)) interacts with ATP. A run of 5 helical transmembrane segments spans residues 1184–1204 (YGFT…LAFL), 1211–1231 (ASLQ…AIIL), 1268–1288 (LPYS…IPGF), 1299–1319 (FLMV…ISAL), and 1325–1345 (IASQ…GVAI). 2 N-linked (GlcNAc...) asparagine glycosylation sites follow: Asn1396 and Asn1418. A helical transmembrane segment spans residues 1449–1469 (LGIFLAFIGSNLIILFLAVSF).

It belongs to the ABC transporter superfamily. ABCG family. PDR (TC 3.A.1.205) subfamily.

It is found in the cell membrane. The catalysed reaction is fluconazole(in) + ATP + H2O = fluconazole(out) + ADP + phosphate + H(+). Its activity is regulated as follows. The efflux inhibitor FK506 does not impair the transport activity. Its function is as follows. ABC efflux transporter that confers resistance to fluconazole (FLC) but shows no resistance to other azoles. Is also able to transport rhodamine 6G (R-6G), a known substrate for many ABC transporters. This Aspergillus fumigatus (strain ATCC MYA-4609 / CBS 101355 / FGSC A1100 / Af293) (Neosartorya fumigata) protein is ABC multidrug transporter I.